Here is a 371-residue protein sequence, read N- to C-terminus: 4-hydroxybenzoate polyprenyltransferase, mitochondrial (371 aa).

Residues 1-34 (MLGSRAAGFARGLRAVALAWLPGWRGRSFALARA) constitute a mitochondrion transit peptide. The Mitochondrial matrix portion of the chain corresponds to 35 to 83 (AGAPHGGDLQPPACPEPRGRQLSLSAAAVVDSAPRPLQPYLRLMRLDKP). The helical transmembrane segment at 84-104 (IGTWLLYLPCTWSIGLAAEPG) threads the bilayer. At 105-108 (CFPD) the chain is on the mitochondrial intermembrane side. Residues 109–129 (WYMLSLFGTGAILMRGAGCTI) form a helical membrane-spanning segment. Topologically, residues 130 to 148 (NDMWDQDYDKKVTRTANRP) are mitochondrial matrix. A helical membrane pass occupies residues 149 to 169 (IAAGDISTFQSFVFLGGQLTL). Residues 170–172 (ALG) are Mitochondrial intermembrane-facing. A helical membrane pass occupies residues 173–193 (VLLCLNYYSIALGAGSLLLVI). Residues 194–203 (TYPLMKRISY) are Mitochondrial matrix-facing. The helical transmembrane segment at 204 to 224 (WPQLALGLTFNWGALLGWSAI) threads the bilayer. At 225–231 (KGSCDPS) the chain is on the mitochondrial intermembrane side. The chain crosses the membrane as a helical span at residues 232 to 252 (VCLPLYFSGVMWTLIYDTIYA). Topologically, residues 253 to 277 (HQDKRDDVLIGLKSTALRFGENTKP) are mitochondrial matrix. A helical transmembrane segment spans residues 278 to 298 (WLSGFSVAMLGALSLVGVNSG). The Mitochondrial intermembrane portion of the chain corresponds to 299 to 300 (QT). The chain crosses the membrane as a helical span at residues 301 to 321 (APYYAALGAVGAHLTHQIYTL). Over 322-332 (DIHRPEDCWNK) the chain is Mitochondrial matrix. The helical transmembrane segment at 333–353 (FISNRTLGLIVFLGIVLGNLW) threads the bilayer. Residues 354-371 (KEKKTDKTKKGIENKIEN) lie on the Mitochondrial intermembrane side of the membrane.

This sequence belongs to the UbiA prenyltransferase family. Requires Mg(2+) as cofactor. In terms of tissue distribution, widely expressed. Present in all of the tissues tested. Expressed at higher level in skeletal muscle, adrenal glands and the heart.

The protein localises to the mitochondrion inner membrane. The catalysed reaction is an all-trans-polyprenyl diphosphate + 4-hydroxybenzoate = a 4-hydroxy-3-(all-trans-polyprenyl)benzoate + diphosphate. The enzyme catalyses all-trans-decaprenyl diphosphate + 4-hydroxybenzoate = 4-hydroxy-3-(all-trans-decaprenyl)benzoate + diphosphate. It catalyses the reaction all-trans-nonaprenyl diphosphate + 4-hydroxybenzoate = 4-hydroxy-3-(all-trans-nonaprenyl)benzoate + diphosphate. The protein operates within cofactor biosynthesis; ubiquinone biosynthesis. In terms of biological role, mediates the second step in the final reaction sequence of coenzyme Q (CoQ) biosynthesis. Catalyzes the prenylation of para-hydroxybenzoate (PHB) with an all-trans polyprenyl donor (such as all-trans-decaprenyl diphosphate). The length of the polyprenyl side chain varies depending on the species, in humans, the side chain is comprised of 10 isoprenyls (decaprenyl) producing CoQ10 (also known as ubiquinone), whereas rodents predominantly generate CoQ9. However, this specificity is not complete, human tissues have low amounts of CoQ9 and rodent organs contain some CoQ10. Plays a central role in the biosynthesis of CoQ10. CoQ10 is a vital molecule that transports electrons from mitochondrial respiratory chain complexes. CoQs also function as cofactors for uncoupling protein and play a role as regulators of the extracellularly-induced ceramide-dependent apoptotic pathway. Regulates mitochondrial permeability transition pore (mPTP) opening and ROS production (pivotal events in cell death) in a tissue specific manner. This Homo sapiens (Human) protein is 4-hydroxybenzoate polyprenyltransferase, mitochondrial.